The following is a 497-amino-acid chain: uncharacterized protein (497 aa).

Positions 1-16 are enriched in polar residues; the sequence is MSTTTETVTWSQYKPQ. The interval 1-29 is disordered; that stretch reads MSTTTETVTWSQYKPQETQRRLSRSSTIT. Ser64 is subject to Phosphoserine. The next 6 helical transmembrane spans lie at 86 to 106, 120 to 140, 155 to 175, 180 to 200, 222 to 242, and 258 to 278; these read IALV…ALPI, FSGL…YPML, FRPL…YSLA, WLYL…MFLY, LNIL…GILA, and AGSW…SIFF. Ser295 is modified (phosphoserine). 6 helical membrane-spanning segments follow: residues 309-329, 348-368, 377-397, 407-427, 443-463, and 468-488; these read FMLC…AGYQ, GNFL…STFL, IMLY…VLDA, FVLY…LVSL, VVQV…GAIF, and VGFI…LLYL.

It is found in the membrane. This is an uncharacterized protein from Schizosaccharomyces pombe (strain 972 / ATCC 24843) (Fission yeast).